The following is a 391-amino-acid chain: MSQEPICQEPMSNVTVRSVPSDNSASNPLDKIVIESATLAARLARPELLELTPYQSARRLGGKGDIWINANESPFNNVAVGELDLTKLNRYPECQPPALINAYSQYSGVVESKIVASRGADEAIELLIRAFCIPGIDSIATFGPTYGMYAISAQTFNVGVKALSLSAEYGLPADFATAARGAKLVFICNPNNPTGTVIDKARIEQAIQALPDSIVVVDEAYIEFCPEYSVADLLETYPNLVVLRTLSKAFALAGARCGFLLANEEIIEIIMRVIAPYPVPLPVSEVAEQALSPAGIARMKTQVKELNTQGERLAAALNLYCEQWGGAVLKPNGNYVLAEFDDVAKVAKLLTDNGIVARAYKDPRLAKAIRFSFSSQVDTDRLVSLFESQKR.

Lys248 is subject to N6-(pyridoxal phosphate)lysine.

This sequence belongs to the class-II pyridoxal-phosphate-dependent aminotransferase family. Histidinol-phosphate aminotransferase subfamily. In terms of assembly, homodimer. It depends on pyridoxal 5'-phosphate as a cofactor.

The catalysed reaction is L-histidinol phosphate + 2-oxoglutarate = 3-(imidazol-4-yl)-2-oxopropyl phosphate + L-glutamate. Its pathway is amino-acid biosynthesis; L-histidine biosynthesis; L-histidine from 5-phospho-alpha-D-ribose 1-diphosphate: step 7/9. This chain is Histidinol-phosphate aminotransferase, found in Shewanella oneidensis (strain ATCC 700550 / JCM 31522 / CIP 106686 / LMG 19005 / NCIMB 14063 / MR-1).